Consider the following 490-residue polypeptide: WD repeat-containing protein JIP5 (490 aa).

7 WD repeats span residues 23–64 (KYND…ERMQ), 70–112 (QKKK…GSCR), 118–155 (PIES…ISKD), 157–196 (SSKD…NKFK), 242–284 (DQED…LMDQ), 286–327 (SRIK…HRVN), and 340–377 (GTAD…EEEE). Positions 368 to 490 (SAEGDDEEEE…SHGIRRFDGL (123 aa)) are disordered. 2 stretches are compositionally biased toward acidic residues: residues 370–406 (EGDD…EGDD) and 413–437 (EESD…EEST). Residues 438–448 (ETDHKNIEAES) show a composition bias toward basic and acidic residues. Positions 450–461 (KQANKRQASQPK) are enriched in polar residues. Residues 469-484 (KQKLKQTSKLAHSHGI) show a composition bias toward basic residues.

This sequence belongs to the WD repeat WDR55 family.

It localises to the nucleus. The protein localises to the nucleolus. The polypeptide is WD repeat-containing protein JIP5 (JIP5) (Meyerozyma guilliermondii (strain ATCC 6260 / CBS 566 / DSM 6381 / JCM 1539 / NBRC 10279 / NRRL Y-324) (Yeast)).